An 860-amino-acid polypeptide reads, in one-letter code: DNA mismatch repair protein MutS (860 aa).

607 to 614 (GPNMSGKS) lines the ATP pocket.

It belongs to the DNA mismatch repair MutS family.

In terms of biological role, this protein is involved in the repair of mismatches in DNA. It is possible that it carries out the mismatch recognition step. This protein has a weak ATPase activity. The sequence is that of DNA mismatch repair protein MutS from Listeria welshimeri serovar 6b (strain ATCC 35897 / DSM 20650 / CCUG 15529 / CIP 8149 / NCTC 11857 / SLCC 5334 / V8).